Here is a 220-residue protein sequence, read N- to C-terminus: Urease accessory protein UreE (220 aa).

Residues 145 to 220 are disordered; that stretch reads EGGAYSAGGH…QIHKRRPDNL (76 aa). Residues 156–177 are compositionally biased toward basic and acidic residues; it reads HGHDHGSHEHSAHDHGKHDHAP. Low complexity predominate over residues 178-188; it reads AKPATAATPAA. Over residues 191–206 the composition is skewed to basic and acidic residues; it reads HGPDCNHGHDHAHEAK.

Belongs to the UreE family.

Its subcellular location is the cytoplasm. In terms of biological role, involved in urease metallocenter assembly. Binds nickel. Probably functions as a nickel donor during metallocenter assembly. This is Urease accessory protein UreE from Polaromonas sp. (strain JS666 / ATCC BAA-500).